A 499-amino-acid chain; its full sequence is Zinc finger protein PLAG1 (499 aa).

Positions 1–33 (MATVIPGDLSEVRDTQKAPSGKRKRGESKPRKN) are disordered. An interaction with KPNA2 region spans residues 2-84 (ATVIPGDLSE…SKYKLQRHMA (83 aa)). The Nuclear localization signal signature appears at 22-25 (KRKR). 7 C2H2-type zinc fingers span residues 34 to 56 (FPCQ…SFSH), 62 to 86 (YKCT…MATH), 92 to 114 (HKCN…LHTH), 121 to 143 (FKCE…LALH), 150 to 172 (LTCK…LKSH), 185 to 207 (HQCE…MVVH), and 213 to 236 (FLCQ…KKSH). Residues 41 to 242 (KAFNSVEKLK…KKSHNQELLK (202 aa)) are decreased nuclear import with localization in the nucleus but also in the cytoplasm. Residues 243–383 (VKTEPVDFLD…SQASSSKLGL (141 aa)) are repression domain; contains 3 sumoylation motifs and massively decrease transcription activity. The tract at residues 243-499 (VKTEPVDFLD…TLPRFHQAFQ (257 aa)) is activates transcription; Inhibition of nuclear import due to lack of NLS and KPNA2 interaction. Residues lysine 244 and lysine 263 each participate in a glycyl lysine isopeptide (Lys-Gly) (interchain with G-Cter in SUMO) cross-link. The disordered stretch occupies residues 364–400 (QGGAPSSSQDSQASSSKLGLEPQSGSPDDGAGDLSLS). Over residues 369-379 (SSSQDSQASSS) the composition is skewed to low complexity. Residues 384–499 (EPQSGSPDDG…TLPRFHQAFQ (116 aa)) form a massively activates transcription region.

It belongs to the krueppel C2H2-type zinc-finger protein family. Interacts with KPNA2, which escorts protein to the nucleus via interaction with nuclear localization signal. Interacts with E3 SUMO-protein ligase PIAS1, PIAS2 and PIAS4. In terms of processing, sumoylated with SUMO1; which inhibits transcriptional activity, but does not affect nuclear localization. Blockers of sumoylation pathway such as SENP3 and inactive UBE2I increases transcriptional capacity. Sumoylation is increased in the presence of PIAS1. Acetylated by lysine acetyltransferase EP300; which activates transcriptional capacity. Lysine residues that are sumoylated also seem to be target for acetylation. As to expression, expressed in heart, spleen, lung, kidney, brain, testis and epididymis but not in salivary glands.

Its subcellular location is the nucleus. In terms of biological role, transcription factor whose activation results in up-regulation of target genes, such as IGFII, leading to uncontrolled cell proliferation: when overexpressed in cultured cells, higher proliferation rate and transformation are observed. Other target genes such as CRLF1, CRABP2, CRIP2, PIGF are strongly induced in cells with PLAG1 induction. Proto-oncogene whose ectopic expression can trigger the development of pleomorphic adenomas of the salivary gland and lipoblastomas. Cooperates with CBFB-MYH11. This is Zinc finger protein PLAG1 (Plag1) from Rattus norvegicus (Rat).